The primary structure comprises 859 residues: Probable helicase A859L (859 aa).

Positions 178–349 (YQELQRSGRA…KNRDLFGGVA (172 aa)) constitute a Helicase ATP-binding domain. Residue 191–198 (MACRCGKT) participates in ATP binding. Residues 298 to 301 (DECH) carry the DEAH box motif. The region spanning 394–553 (QIIMALAYLK…RFYEHLLNPS (160 aa)) is the Helicase C-terminal domain.

The protein belongs to the asfivirus helicase A859L family.

This is Probable helicase A859L from Ornithodoros (relapsing fever ticks).